The sequence spans 269 residues: 3-methyl-2-oxobutanoate hydroxymethyltransferase (269 aa).

Residues Asp-49 and Asp-88 each coordinate Mg(2+). 3-methyl-2-oxobutanoate-binding positions include Asp-49–Ser-50, Asp-88, and Lys-118. Residue Glu-120 participates in Mg(2+) binding. The active-site Proton acceptor is the Glu-186.

The protein belongs to the PanB family. In terms of assembly, homodecamer; pentamer of dimers. It depends on Mg(2+) as a cofactor.

The protein localises to the cytoplasm. The catalysed reaction is 3-methyl-2-oxobutanoate + (6R)-5,10-methylene-5,6,7,8-tetrahydrofolate + H2O = 2-dehydropantoate + (6S)-5,6,7,8-tetrahydrofolate. It functions in the pathway cofactor biosynthesis; (R)-pantothenate biosynthesis; (R)-pantoate from 3-methyl-2-oxobutanoate: step 1/2. Its function is as follows. Catalyzes the reversible reaction in which hydroxymethyl group from 5,10-methylenetetrahydrofolate is transferred onto alpha-ketoisovalerate to form ketopantoate. This is 3-methyl-2-oxobutanoate hydroxymethyltransferase from Pelobacter propionicus (strain DSM 2379 / NBRC 103807 / OttBd1).